The chain runs to 211 residues: ATP-dependent dethiobiotin synthetase BioD (211 aa).

Glycine 13–valine 18 lines the ATP pocket. Threonine 17 lines the Mg(2+) pocket. Lysine 33 is a catalytic residue. Mg(2+) contacts are provided by cysteine 47 and glutamate 101. ATP-binding positions include glutamate 101–glycine 104, proline 185–leucine 187, and asparagine 192.

This sequence belongs to the dethiobiotin synthetase family. In terms of assembly, homodimer. The cofactor is Mg(2+).

Its subcellular location is the cytoplasm. It catalyses the reaction (7R,8S)-7,8-diammoniononanoate + CO2 + ATP = (4R,5S)-dethiobiotin + ADP + phosphate + 3 H(+). It participates in cofactor biosynthesis; biotin biosynthesis; biotin from 7,8-diaminononanoate: step 1/2. Catalyzes a mechanistically unusual reaction, the ATP-dependent insertion of CO2 between the N7 and N8 nitrogen atoms of 7,8-diaminopelargonic acid (DAPA, also called 7,8-diammoniononanoate) to form a ureido ring. In Bradyrhizobium diazoefficiens (strain JCM 10833 / BCRC 13528 / IAM 13628 / NBRC 14792 / USDA 110), this protein is ATP-dependent dethiobiotin synthetase BioD.